Here is a 554-residue protein sequence, read N- to C-terminus: MAYYRTPHDVTALPAWQALNDHRKAMQDFSMREAFNADPQRFTQFTLSSCGLFLDYSKNLINAQTRDLLVGLANEVDLKGAIKSLFEGEIVNASENRPALHTALRRPVGDKLLVNGVNVMPDVHKVLNQITDLVGRIHDGLWRGYTEKPITDVVNIGIGGSFLGPELVSEALLSYAQKGVRCHYLANIDGSEFHELTMKLRAETTLFIVSSKSFNTLETLKNAQAARAWYLAQGGSEAELYRHFIAVSSNNAAAVAFGIREENIFPMWDWVGGRYSLWSAIGLPIALAIGMSNFKELLSGAYSMDQHFQSAPFEQNMPVLLALLGVWYGNFWGAQSHAILPYDHYLRNITKHLQQLDMESNGKSVRQDGTPVSTDTGPVIWGGVGCNGQHAYHQLLHQGTQLIPADFIVPIVSFNPVSDHHQWLYANCLSQSQALMLGKTRAEAEXELRDKGASEEEVQKLASHKVIPGNRPSNTLVVERISPRRLGALVALYEHKVFVQSVVWGINAFDQWGVELGKELGKGVYNRLVGSEESLAEDASTQGLINYFRGRHRG.

Glutamate 359 (proton donor) is an active-site residue. Active-site residues include histidine 390 and lysine 518.

The protein belongs to the GPI family.

Its subcellular location is the cytoplasm. The enzyme catalyses alpha-D-glucose 6-phosphate = beta-D-fructose 6-phosphate. It participates in carbohydrate biosynthesis; gluconeogenesis. The protein operates within carbohydrate degradation; glycolysis; D-glyceraldehyde 3-phosphate and glycerone phosphate from D-glucose: step 2/4. Its function is as follows. Catalyzes the reversible isomerization of glucose-6-phosphate to fructose-6-phosphate. The chain is Glucose-6-phosphate isomerase from Pseudomonas fluorescens.